The primary structure comprises 306 residues: Ribonuclease Z (306 aa).

H63, H65, D67, H68, H140, D211, and H269 together coordinate Zn(2+). D67 (proton acceptor) is an active-site residue.

It belongs to the RNase Z family. Homodimer. Zn(2+) is required as a cofactor.

The catalysed reaction is Endonucleolytic cleavage of RNA, removing extra 3' nucleotides from tRNA precursor, generating 3' termini of tRNAs. A 3'-hydroxy group is left at the tRNA terminus and a 5'-phosphoryl group is left at the trailer molecule.. Its function is as follows. Zinc phosphodiesterase, which displays some tRNA 3'-processing endonuclease activity. Probably involved in tRNA maturation, by removing a 3'-trailer from precursor tRNA. This is Ribonuclease Z from Listeria monocytogenes serotype 4a (strain HCC23).